Here is a 524-residue protein sequence, read N- to C-terminus: Bifunctional NAD(P)H-hydrate repair enzyme Nnr (524 aa).

An NAD(P)H-hydrate epimerase region spans residues 1-223 (MAVTSPWFRA…QAIANVLGEV (223 aa)). One can recognise a YjeF N-terminal domain in the interval 17–217 (MQEIENWLFT…GIGLPPQAIA (201 aa)). The NADPHX 1; for epimerase activity stretch occupies residues 66–70 (HNGGD). K(+) contacts are provided by Asn67 and Asp127. Positions 131–137 (GVGLTRL) are NADPHX 1; for epimerase activity. Asp160 provides a ligand contact to (6S)-NADPHX. A K(+)-binding site is contributed by Ser163. The 278-residue stretch at 231-508 (ADQAQQTLPL…EYLIPACRQW (278 aa)) folds into the YjeF C-terminal domain. The ADP-dependent (S)-NAD(P)H-hydrate dehydratase stretch occupies residues 231-524 (ADQAQQTLPL…NWPANLSHSS (294 aa)). Gly333 provides a ligand contact to (6S)-NADPHX. Residues 383-389 (HGGEFKR) form an NADPHX 2; for dehydratase activity region. ADP is bound by residues 417-421 (KGAKT) and 437-446 (TPALARGGSG). Asp447 is a (6S)-NADPHX binding site.

The protein in the N-terminal section; belongs to the NnrE/AIBP family. In the C-terminal section; belongs to the NnrD/CARKD family. The cofactor is K(+).

The enzyme catalyses (6S)-NADHX + ADP = AMP + phosphate + NADH + H(+). It carries out the reaction (6S)-NADPHX + ADP = AMP + phosphate + NADPH + H(+). It catalyses the reaction (6R)-NADHX = (6S)-NADHX. The catalysed reaction is (6R)-NADPHX = (6S)-NADPHX. Bifunctional enzyme that catalyzes the epimerization of the S- and R-forms of NAD(P)HX and the dehydration of the S-form of NAD(P)HX at the expense of ADP, which is converted to AMP. This allows the repair of both epimers of NAD(P)HX, a damaged form of NAD(P)H that is a result of enzymatic or heat-dependent hydration. The protein is Bifunctional NAD(P)H-hydrate repair enzyme Nnr (nnr) of Synechocystis sp. (strain ATCC 27184 / PCC 6803 / Kazusa).